The chain runs to 309 residues: MVMVRDNQFLNLKLSPIQAPTTIPPCRFPIIPATKVSATVSSCASNTFSVANLDRISVLGSGNGGTVFKVKDKTTSEIYALKKVKENWDSTSLREIEILRMVNSPYVAKCHDIFQNPSGEVSILMDYMDLGSLESLRGVTEKQLALMSRQVLEGKNYLHEHKIVHRDIKPANLLRSSKEEVKIADFGVSKIVVRSLNKCNSFVGTFAYMSPERLDSEADGVTEEDKSNVYAGDIWSFGLTMLEILVGYYPMLPDQAAIVCAVCFGEPPKAPEECSDDLKSFMDCCLRKKASERWTASQLLNHPFLLHQD.

Residues 53-305 (LDRISVLGSG…ASQLLNHPFL (253 aa)) enclose the Protein kinase domain. ATP-binding positions include 59 to 67 (LGSGNGGTV) and lysine 82. Aspartate 167 serves as the catalytic Proton acceptor. Residues serine 195 and serine 201 each carry the phosphoserine modification. Threonine 205 carries the post-translational modification Phosphothreonine.

The protein belongs to the protein kinase superfamily. STE Ser/Thr protein kinase family. MAP kinase kinase subfamily. Phosphorylation at Ser-195 and Ser-201 by MAP kinase kinase kinases positively regulates kinase activity.

The enzyme catalyses L-seryl-[protein] + ATP = O-phospho-L-seryl-[protein] + ADP + H(+). It catalyses the reaction L-threonyl-[protein] + ATP = O-phospho-L-threonyl-[protein] + ADP + H(+). It carries out the reaction L-tyrosyl-[protein] + ATP = O-phospho-L-tyrosyl-[protein] + ADP + H(+). In Arabidopsis thaliana (Mouse-ear cress), this protein is Mitogen-activated protein kinase kinase 8 (MKK8).